The primary structure comprises 523 residues: Major facilitator-type transporter psiT2 (523 aa).

Residues 1-26 (MSLERSTSPNPTERTSLLSDTASTIS) are compositionally biased toward polar residues. The tract at residues 1–45 (MSLERSTSPNPTERTSLLSDTASTISSRDDVEQSSLKQRRTPIPT) is disordered. The next 5 helical transmembrane spans lie at 88–108 (FYSG…IFML), 125–145 (ALGI…TMML), 149–169 (VCAG…SELT), 175–195 (ALVV…GPLI), and 221–241 (FLPS…GYFF). Asparagine 269 carries an N-linked (GlcNAc...) asparagine glycan. The next 3 helical transmembrane spans lie at 317–337 (FLMF…FTAV), 352–372 (AFSV…PWVL), and 382–402 (HFCM…NPLA). Asparagine 410 carries N-linked (GlcNAc...) asparagine glycosylation. 3 consecutive transmembrane segments (helical) span residues 419–439 (GLLY…VMAF), 455–474 (LATA…AFCP), and 488–508 (NILG…VGVW).

Belongs to the major facilitator superfamily. TCR/Tet family.

It localises to the membrane. Functionally, major facilitator-type transporter; part of the gene cluster that mediates the biosynthesis of psilocybin, a psychotropic tryptamine-derived natural product. This is Major facilitator-type transporter psiT2 from Psilocybe cubensis (Psychedelic mushroom).